A 31-amino-acid chain; its full sequence is Photosystem II reaction center protein T (31 aa).

The chain crosses the membrane as a helical span at residues 3-23 (AIVYTFLLVGTLGIIFFAIFF).

The protein belongs to the PsbT family. PSII is composed of 1 copy each of membrane proteins PsbA, PsbB, PsbC, PsbD, PsbE, PsbF, PsbH, PsbI, PsbJ, PsbK, PsbL, PsbM, PsbT, PsbY, PsbZ, Psb30/Ycf12, at least 3 peripheral proteins of the oxygen-evolving complex and a large number of cofactors. It forms dimeric complexes.

It localises to the plastid. The protein localises to the chloroplast thylakoid membrane. Its function is as follows. Found at the monomer-monomer interface of the photosystem II (PS II) dimer, plays a role in assembly and dimerization of PSII. PSII is a light-driven water plastoquinone oxidoreductase, using light energy to abstract electrons from H(2)O, generating a proton gradient subsequently used for ATP formation. The sequence is that of Photosystem II reaction center protein T from Ostreococcus tauri.